A 246-amino-acid polypeptide reads, in one-letter code: Phosphomannomutase 2 (246 aa).

Ala-2 is modified (N-acetylalanine). The Nucleophile role is filled by Asp-12. Asp-12 and Asp-14 together coordinate Mg(2+). The active-site Proton donor/acceptor is the Asp-14. Alpha-D-mannose 1-phosphate-binding residues include Arg-21, Arg-123, Arg-134, Arg-141, Ser-179, and Asp-181. Residues Asp-209, Phe-221, Asp-223, and Thr-226 each coordinate Mg(2+).

This sequence belongs to the eukaryotic PMM family. In terms of assembly, homodimer.

It is found in the cytoplasm. It catalyses the reaction alpha-D-mannose 1-phosphate = D-mannose 6-phosphate. It participates in nucleotide-sugar biosynthesis; GDP-alpha-D-mannose biosynthesis; alpha-D-mannose 1-phosphate from D-fructose 6-phosphate: step 2/2. Its function is as follows. Involved in the synthesis of the GDP-mannose and dolichol-phosphate-mannose required for a number of critical mannosyl transfer reactions. This Bos taurus (Bovine) protein is Phosphomannomutase 2 (PMM2).